The following is a 398-amino-acid chain: Flavin-containing monooxygenase ustF1 (398 aa).

An N-terminal signal peptide occupies residues 1–22 (MTVSQVRRVAVIGAGISGVVST). 13–18 (GAGISG) is an FAD binding site. Residues Asn-53, Asn-57, Asn-119, and Asn-126 are each glycosylated (N-linked (GlcNAc...) asparagine). Residue 194–199 (GGGVSS) participates in NADP(+) binding. Asn-236, Asn-243, and Asn-271 each carry an N-linked (GlcNAc...) asparagine glycan.

The protein belongs to the FMO family.

It functions in the pathway mycotoxin biosynthesis. In terms of biological role, flavin-containing monooxygenase; part of the gene cluster that mediates the biosynthesis of the secondary metabolite ustiloxin B, an antimitotic tetrapeptide. First, ustA is processed by the subtilisin-like endoprotease Kex2 that is outside the ustiloxin B gene cluster, at the C-terminal side of Arg-Lys, after transfer to Golgi apparatus through the endoplasmic reticulum (ER). Cleavage by KEX2 generates 16 peptides YAIG-I to YAIG-XVI. To process the precursor peptide further, at least two peptidases are necessary to cleave the N-terminal and C-terminal sides of the Tyr-Ala-Ile-Gly core peptide which serves as backbone for the synthesis of ustiloxin B, through cyclization and modification of the tyrosine with a non-protein coding amino acid, norvaline. One of the two peptidases must be the serine peptidase ustP; and the other pepdidase is probably ustH. Macrocyclization of the core peptide derived from ustA requires the tyrosinase ustQ, as well as the homologous oxidases ustYa and ustYb, and leads to the production of the first cyclization product N-desmethylustiloxin F. For the formation of N-desmethylustiloxin F, three oxidation steps are required, hydroxylation at the benzylic position, hydroxylation at either the aromatic ring of Tyr or beta-position of Ile, and oxidative cyclization. UstQ may catalyze the oxidation of a phenol moiety, whereas the ustYa and ustYb are most likely responsible for the remaining two-step oxidations. N-desmethylustiloxin F is then methylated by ustM to yield ustiloxin F which in turn substrate of the cytochrome P450 monooxygenase ustC which catalyzes the formation of S-deoxyustiloxin H. The flavoprotein monooxygenases ustF1 and ustF2 then participate in the modification of the side chain of S-deoxyustiloxin H, leading to the synthesis of an oxime intermediate, via ustiloxin H. Finally, carboxylative dehydration performed by the cysteine desulfurase-like protein ustD yields ustiloxin B. In Aspergillus flavus (strain ATCC 200026 / FGSC A1120 / IAM 13836 / NRRL 3357 / JCM 12722 / SRRC 167), this protein is Flavin-containing monooxygenase ustF1.